A 380-amino-acid chain; its full sequence is Proline iminopeptidase (380 aa).

The AB hydrolase-1 domain maps to 98 to 360; that stretch reads PVVFLHGGPG…IVYDAGHSAN (263 aa). S172 (nucleophile) is an active-site residue. D329 is a catalytic residue. H357 acts as the Proton donor in catalysis.

This sequence belongs to the peptidase S33 family.

Its subcellular location is the cytoplasm. It catalyses the reaction Release of N-terminal proline from a peptide.. In terms of biological role, specifically catalyzes the removal of N-terminal proline residues from peptides. This Arabidopsis thaliana (Mouse-ear cress) protein is Proline iminopeptidase (PIP).